The following is a 491-amino-acid chain: Pyruvate carboxylase subunit A (491 aa).

The Biotin carboxylation domain occupies 1–445; the sequence is MFSKILVANR…HTHFVDEYRR (445 aa). The ATP site is built by K116, E200, and H235. The ATP-grasp domain occupies 120–316; the sequence is KKLMKKAGVP…LVKEQIRVAS (197 aa). R291 is an active-site residue.

In terms of assembly, heterooctamer of four A and four B subunits. It depends on Mg(2+) as a cofactor. Requires Mn(2+) as cofactor. Co(2+) serves as cofactor.

The enzyme catalyses hydrogencarbonate + pyruvate + ATP = oxaloacetate + ADP + phosphate + H(+). Its pathway is carbohydrate biosynthesis; gluconeogenesis. Its activity is regulated as follows. Inhibited by ADP and alpha-ketoglutarate. Pyruvate carboxylase catalyzes a 2-step reaction, involving the ATP-dependent carboxylation of the covalently attached biotin in the first step and the transfer of the carboxyl group to pyruvate in the second. The sequence is that of Pyruvate carboxylase subunit A (pycA) from Methanothermobacter thermautotrophicus (strain ATCC 29096 / DSM 1053 / JCM 10044 / NBRC 100330 / Delta H) (Methanobacterium thermoautotrophicum).